The chain runs to 277 residues: Phosphatidylglycerol--prolipoprotein diacylglyceryl transferase (277 aa).

A run of 4 helical transmembrane segments spans residues isoleucine 18 to alanine 38, isoleucine 51 to tyrosine 71, isoleucine 89 to isoleucine 109, and isoleucine 116 to glycine 136. Arginine 137 is a binding site for a 1,2-diacyl-sn-glycero-3-phospho-(1'-sn-glycerol). Transmembrane regions (helical) follow at residues glutamine 177–isoleucine 197, glycine 205–methionine 225, and phenylalanine 235–tyrosine 255.

It belongs to the Lgt family.

The protein resides in the cell membrane. The catalysed reaction is L-cysteinyl-[prolipoprotein] + a 1,2-diacyl-sn-glycero-3-phospho-(1'-sn-glycerol) = an S-1,2-diacyl-sn-glyceryl-L-cysteinyl-[prolipoprotein] + sn-glycerol 1-phosphate + H(+). Its pathway is protein modification; lipoprotein biosynthesis (diacylglyceryl transfer). In terms of biological role, catalyzes the transfer of the diacylglyceryl group from phosphatidylglycerol to the sulfhydryl group of the N-terminal cysteine of a prolipoprotein, the first step in the formation of mature lipoproteins. This chain is Phosphatidylglycerol--prolipoprotein diacylglyceryl transferase, found in Listeria monocytogenes serotype 4b (strain CLIP80459).